We begin with the raw amino-acid sequence, 204 residues long: MTKMYINTIIEYIDSNIAYSPIVFFSLLILAGLNVPISEDAIVLMGGILSSRKNEYTILIFLGIFWGAYLGDIISFYIGKLMGNKLFKNKKDNNLLDKINYYYGQYGVLTLFIGRFIPFGVRNAIFMSAGMGNMKSNLFIVSDFFATLLSIVVYFTLSFKLGQSFEIIFSKIKIIIFAIFIAVIATTIIIYVIKKNKKVDKNLK.

5 consecutive transmembrane segments (helical) span residues 17–37, 58–78, 101–121, 139–159, and 172–192; these read IAYSPIVFFSLLILAGLNVPI, ILIFLGIFWGAYLGDIISFYI, YYYGQYGVLTLFIGRFIPFGV, FIVSDFFATLLSIVVYFTLSF, and IKIIIFAIFIAVIATTIIIYV.

Belongs to the DedA family.

The protein resides in the cell inner membrane. Required for proper cell division and envelope integrity. The sequence is that of Inner membrane protein BB_0250 from Borreliella burgdorferi (strain ATCC 35210 / DSM 4680 / CIP 102532 / B31) (Borrelia burgdorferi).